The sequence spans 78 residues: Putative DPH3 homolog B (78 aa).

The 57-residue stretch at 4-60 folds into the DPH-type MB domain; sequence FHDEVEIEDFQYDEDSETYFCPCPCGDNFSITKEELENGEGVAMCPGCSLIIKVIYD. Zn(2+)-binding residues include Cys-26, Cys-28, Cys-48, and Cys-51.

The protein belongs to the DPH3 family.

The sequence is that of Putative DPH3 homolog B (DPH3P1) from Homo sapiens (Human).